A 334-amino-acid chain; its full sequence is Ornithine carbamoyltransferase (334 aa).

Residues 57 to 60, Gln-84, Arg-108, and 135 to 138 contribute to the carbamoyl phosphate site; these read STRT and HPTQ. Residues Asn-169, Asp-233, and 237–238 each bind L-ornithine; that span reads SM. Carbamoyl phosphate contacts are provided by residues 275–276 and Arg-320; that span reads CL.

It belongs to the aspartate/ornithine carbamoyltransferase superfamily. OTCase family.

The protein localises to the cytoplasm. The enzyme catalyses carbamoyl phosphate + L-ornithine = L-citrulline + phosphate + H(+). It participates in amino-acid biosynthesis; L-arginine biosynthesis; L-arginine from L-ornithine and carbamoyl phosphate: step 1/3. Reversibly catalyzes the transfer of the carbamoyl group from carbamoyl phosphate (CP) to the N(epsilon) atom of ornithine (ORN) to produce L-citrulline. In Aliivibrio fischeri (strain ATCC 700601 / ES114) (Vibrio fischeri), this protein is Ornithine carbamoyltransferase.